The primary structure comprises 199 residues: NAD(P)H dehydrogenase (quinone) (199 aa).

Residues 4–190 (ILVLYYSMYG…AIARFQGEHV (187 aa)) form the Flavodoxin-like domain. FMN-binding positions include 10-15 (SMYGHI) and 79-81 (TRF). Position 12 (tyrosine 12) interacts with NAD(+). Tryptophan 99 contacts substrate. FMN contacts are provided by residues 114-119 (STGTGG) and histidine 134.

It belongs to the WrbA family. Requires FMN as cofactor.

The enzyme catalyses a quinone + NADH + H(+) = a quinol + NAD(+). The catalysed reaction is a quinone + NADPH + H(+) = a quinol + NADP(+). The chain is NAD(P)H dehydrogenase (quinone) from Yersinia enterocolitica serotype O:8 / biotype 1B (strain NCTC 13174 / 8081).